We begin with the raw amino-acid sequence, 108 residues long: DNA-binding protein HBbu (108 aa).

The protein belongs to the bacterial histone-like protein family.

Histone-like DNA-binding protein which is capable of wrapping DNA to stabilize it, and thus to prevent its denaturation under extreme environmental conditions. This Borrelia parkeri protein is DNA-binding protein HBbu (hbb).